The sequence spans 678 residues: Zinc finger translocation-associated protein (678 aa).

Disordered stretches follow at residues 1–100 (MEPG…PGRD), 174–250 (GAGG…GSRG), 333–413 (LSEL…RDHR), and 493–583 (PESP…NYQP). Residues 66–78 (PSSRARGPASSGR) show a composition bias toward low complexity. Positions 79 to 88 (KYSDHCEARA) are enriched in basic and acidic residues. The span at 187 to 200 (AEEEEEEDEEEEEG) shows a compositional bias: acidic residues. The span at 205-214 (ACPPKGSGKA) shows a compositional bias: low complexity. A Glycyl lysine isopeptide (Lys-Gly) (interchain with G-Cter in SUMO2) cross-link involves residue lysine 375. The span at 493 to 509 (PESPSVPVAPSTASASE) shows a compositional bias: low complexity. Acidic residues-rich tracts occupy residues 512–524 (GGAEEAEPEEEWW) and 539–549 (AEEEDDEDDSQ). The segment covering 557-572 (PPLPLPPPPPPPPPPP) has biased composition (pro residues). The span at 573-583 (RSREQRRNYQP) shows a compositional bias: basic and acidic residues.

This Mus musculus (Mouse) protein is Zinc finger translocation-associated protein.